The chain runs to 93 residues: Cobalt transport protein CbiN (93 aa).

The next 2 membrane-spanning stretches (helical) occupy residues 5–25 and 63–83; these read LMLLVMVVALVILPFFINHGG and LLFTLQGSLGAAVIFYILGYC.

Belongs to the CbiN family. In terms of assembly, forms an energy-coupling factor (ECF) transporter complex composed of an ATP-binding protein (A component, CbiO), a transmembrane protein (T component, CbiQ) and 2 possible substrate-capture proteins (S components, CbiM and CbiN) of unknown stoichimetry.

Its subcellular location is the cell inner membrane. It functions in the pathway cofactor biosynthesis; adenosylcobalamin biosynthesis. In terms of biological role, part of the energy-coupling factor (ECF) transporter complex CbiMNOQ involved in cobalt import. This is Cobalt transport protein CbiN from Salmonella paratyphi B (strain ATCC BAA-1250 / SPB7).